The chain runs to 202 residues: Holliday junction branch migration complex subunit RuvA (202 aa).

Positions 1–64 (MIGYLKGQIL…YDGTVLYGFL (64 aa)) are domain I. The segment at 65 to 146 (TKEDKQLWAI…AVTIAGVPKI (82 aa)) is domain II. Residues 147-155 (KIEGEAPFM) are flexible linker. The tract at residues 155–202 (MSEVMMALTALGYSPMEARKAIDQLYKTGLANDSVENIIRAALRILKK) is domain III.

It belongs to the RuvA family. Homotetramer. Forms an RuvA(8)-RuvB(12)-Holliday junction (HJ) complex. HJ DNA is sandwiched between 2 RuvA tetramers; dsDNA enters through RuvA and exits via RuvB. An RuvB hexamer assembles on each DNA strand where it exits the tetramer. Each RuvB hexamer is contacted by two RuvA subunits (via domain III) on 2 adjacent RuvB subunits; this complex drives branch migration. In the full resolvosome a probable DNA-RuvA(4)-RuvB(12)-RuvC(2) complex forms which resolves the HJ.

It localises to the cytoplasm. The RuvA-RuvB-RuvC complex processes Holliday junction (HJ) DNA during genetic recombination and DNA repair, while the RuvA-RuvB complex plays an important role in the rescue of blocked DNA replication forks via replication fork reversal (RFR). RuvA specifically binds to HJ cruciform DNA, conferring on it an open structure. The RuvB hexamer acts as an ATP-dependent pump, pulling dsDNA into and through the RuvAB complex. HJ branch migration allows RuvC to scan DNA until it finds its consensus sequence, where it cleaves and resolves the cruciform DNA. The protein is Holliday junction branch migration complex subunit RuvA of Elusimicrobium minutum (strain Pei191).